The chain runs to 383 residues: Acetylornithine deacetylase (383 aa).

Zn(2+) is bound at residue His80. Asp82 is a catalytic residue. Asp112 provides a ligand contact to Zn(2+). Residue Glu144 is part of the active site. Residues Glu145, Glu169, and His355 each coordinate Zn(2+).

Belongs to the peptidase M20A family. ArgE subfamily. In terms of assembly, homodimer. Requires Zn(2+) as cofactor. It depends on Co(2+) as a cofactor. Glutathione serves as cofactor.

Its subcellular location is the cytoplasm. The enzyme catalyses N(2)-acetyl-L-ornithine + H2O = L-ornithine + acetate. Its pathway is amino-acid biosynthesis; L-arginine biosynthesis; L-ornithine from N(2)-acetyl-L-ornithine (linear): step 1/1. In terms of biological role, catalyzes the hydrolysis of the amide bond of N(2)-acetylated L-amino acids. Cleaves the acetyl group from N-acetyl-L-ornithine to form L-ornithine, an intermediate in L-arginine biosynthesis pathway, and a branchpoint in the synthesis of polyamines. The sequence is that of Acetylornithine deacetylase from Escherichia coli O139:H28 (strain E24377A / ETEC).